A 257-amino-acid polypeptide reads, in one-letter code: Gamma-secretase subunit APH-1B (257 aa).

7 helical membrane passes run 5–25, 32–52, 66–86, 115–135, 160–180, 186–206, and 213–233; these read VFFGCAFIAFGPALALYVFTI, VIFLIAGAFFWLVSLLLSSVF, PVQNYLLIFGVLLSVCIQELF, LLAYVSGLGFGIMSGVFSFVN, AFMTLVVIMLHVFWGVVFFDG, WYTLLTVLLTHLVVSTQTFLS, and LVTAYIIMVLMGIWAFYVAGG.

It belongs to the APH-1 family. In terms of assembly, probable component of the gamma-secretase complex, a complex composed of a presenilin homodimer (PSEN1 or PSEN2), nicastrin (NCSTN), APH1 (APH1A or APH1B) and PEN2. Such minimal complex is sufficient for secretase activity, although other components may exist. Interacts with PSEN1 and PSEN2.

It localises to the membrane. In terms of biological role, probable subunit of the gamma-secretase complex, an endoprotease complex that catalyzes the intramembrane cleavage of integral proteins such as Notch receptors and APP (amyloid-beta precursor protein). It probably represents a stabilizing cofactor for the presenilin homodimer that promotes the formation of a stable complex. Probably present in a minority of gamma-secretase complexes compared to APH1A. The chain is Gamma-secretase subunit APH-1B (Aph1b) from Mus musculus (Mouse).